Here is a 793-residue protein sequence, read N- to C-terminus: Transcription factor castor (793 aa).

The span at 44–53 (NEDISSSTSV) shows a compositional bias: polar residues. Disordered stretches follow at residues 44–101 (NEDI…NLIA), 199–259 (VTST…HTNA), and 272–296 (LEST…DSSY). Composition is skewed to low complexity over residues 54–68 (QQQQ…QQPQ), 81–98 (SSQN…PNSN), and 210–221 (ATPAPSAGATAG). Phosphothreonine is present on Thr211. Phosphoserine is present on Ser215. The segment covering 233-242 (ESADDDEDDD) has biased composition (acidic residues). Residues 245–254 (LSSLTSCSSS) show a composition bias toward low complexity. The segment covering 273 to 284 (ESTTDSLDSPSM) has biased composition (polar residues). The segment at 377-402 (FHCHEEPCQGKILSKKDDIIRHLKWH) adopts a C2H2-type 1; atypical zinc-finger fold. 3 consecutive C2H2-type zinc fingers follow at residues 439 to 463 (YHCV…ANFH), 498 to 522 (YHCC…KTYH), and 556 to 580 (IHCV…KRKH). Residues 599–682 (EESSLDAMPQ…RLKVEDESSN (84 aa)) form a disordered region. Residues 608–629 (QQQQQQQQQQPTSLSQSQSSSS) are compositionally biased toward low complexity. Positions 630–644 (VCGGSNTSTPLSSLS) are enriched in polar residues. Positions 650–662 (ARKRGRPPKKIQL) form a DNA-binding region, a.T hook.

Expressed in a specific subset of neuroblasts in the ventral nerve cord and the procephalic region in the embryo. Expressed in many, if not all, late delaminating NBs, and in early NBs, but only after they have undergone several rounds of ganglion mother cell-producing divisions.

It localises to the nucleus. Transcription factor that specifies expression of key genes in developing central nervous system (CNS). Essential for many, if not all, late developing neuroblastoma (NB) sublineages. Binds to the 5'-[CG]C[CT][CT]AAAAA[AT]-3' DNA sequence, like hb, suggesting that cas and hb act as a late regulators in early and late CNS NB sublineage, respectively. Acts by repressing expression of nub/pdm-1 and pdm2/pdm-2 POU genes, and restrict their pattern of expression in appropriate cells. Required for a full expression of vvl/drifter and acj6/I-POU; it is however unknown whether it directly activates these genes. Controls engrailed (en) expression in the ventral nerve cord. This is Transcription factor castor (cas) from Drosophila melanogaster (Fruit fly).